The sequence spans 692 residues: Elongation factor G (692 aa).

The tr-type G domain maps to 8-282 (AKTRNIGIMA…AVIAYLPSPL (275 aa)). GTP is bound by residues 17-24 (AHVDAGKT), 81-85 (DTPGH), and 135-138 (NKMD).

This sequence belongs to the TRAFAC class translation factor GTPase superfamily. Classic translation factor GTPase family. EF-G/EF-2 subfamily.

Its subcellular location is the cytoplasm. Catalyzes the GTP-dependent ribosomal translocation step during translation elongation. During this step, the ribosome changes from the pre-translocational (PRE) to the post-translocational (POST) state as the newly formed A-site-bound peptidyl-tRNA and P-site-bound deacylated tRNA move to the P and E sites, respectively. Catalyzes the coordinated movement of the two tRNA molecules, the mRNA and conformational changes in the ribosome. This is Elongation factor G from Streptococcus equi subsp. equi (strain 4047).